A 477-amino-acid polypeptide reads, in one-letter code: Glycogen synthase (477 aa).

An ADP-alpha-D-glucose-binding site is contributed by K15.

The protein belongs to the glycosyltransferase 1 family. Bacterial/plant glycogen synthase subfamily.

The enzyme catalyses [(1-&gt;4)-alpha-D-glucosyl](n) + ADP-alpha-D-glucose = [(1-&gt;4)-alpha-D-glucosyl](n+1) + ADP + H(+). It functions in the pathway glycan biosynthesis; glycogen biosynthesis. Synthesizes alpha-1,4-glucan chains using ADP-glucose. The sequence is that of Glycogen synthase from Anaeromyxobacter dehalogenans (strain 2CP-1 / ATCC BAA-258).